We begin with the raw amino-acid sequence, 270 residues long: Putative phosphoenolpyruvate synthase regulatory protein (270 aa).

150–157 (GVSRCGKT) provides a ligand contact to ADP.

It belongs to the pyruvate, phosphate/water dikinase regulatory protein family. PSRP subfamily.

It catalyses the reaction [pyruvate, water dikinase] + ADP = [pyruvate, water dikinase]-phosphate + AMP + H(+). It carries out the reaction [pyruvate, water dikinase]-phosphate + phosphate + H(+) = [pyruvate, water dikinase] + diphosphate. Functionally, bifunctional serine/threonine kinase and phosphorylase involved in the regulation of the phosphoenolpyruvate synthase (PEPS) by catalyzing its phosphorylation/dephosphorylation. The sequence is that of Putative phosphoenolpyruvate synthase regulatory protein from Shewanella baltica (strain OS223).